A 245-amino-acid chain; its full sequence is Complement C1q subcomponent subunit A (245 aa).

An N-terminal signal peptide occupies residues Met1–Ala22. Residues Ala28 to Arg114 form a disordered region. Positions Gly31 to Ile109 constitute a Collagen-like domain. 2 positions are modified to 4-hydroxyproline: Pro39 and Pro45. Lys48 is subject to 5-hydroxylysine. An O-linked (Gal...) hydroxylysine; alternate glycan is attached at Lys48. The residue at position 54 (Pro54) is a 4-hydroxyproline. Lys67 is modified (5-hydroxylysine). Residue Lys67 is glycosylated (O-linked (Gal...) hydroxylysine; alternate). 4-hydroxyproline is present on residues Pro79 and Pro85. The span at Pro79–Leu99 shows a compositional bias: low complexity. At Lys100 the chain carries 5-hydroxylysine. O-linked (Gal...) hydroxylysine; alternate glycosylation is present at Lys100. Positions Arg110–Ala245 constitute a C1q domain. Asn146 is a glycosylation site (N-linked (GlcNAc...) asparagine). Residue Gln199 participates in Ca(2+) binding.

Core component of the complement C1 complex, a calcium-dependent complex composed of 1 molecule of the C1Q subcomplex, 2 molecules of C1R and 2 molecules of C1S. The C1Q subcomplex is composed 18 subunits: 3 chains of C1QA, C1QB, and C1QC trimerize to form 6 collagen-like triple helices connected to six globular ligand-recognition modules (C1q domain). Interacts with CR1 (via Sushi 24 and Sushi 25 domains). Interacts (via C-terminus) with CD33; this interaction activates CD33 inhibitory motifs. Post-translationally, O-linked glycans are assumed to be the Glc-Gal disaccharides typically found as secondary modifications of hydroxylated lysines in collagen-like domains.

Its subcellular location is the secreted. The protein localises to the cell surface. The C1Q subcomplex is inhibited by sulfated molecules, such as triterpenoid sulfates, heparan sulfate, or chondroitin sulfates. Core component of the complement C1 complex, a multiprotein complex that initiates the classical pathway of the complement system, a cascade of proteins that leads to phagocytosis and breakdown of pathogens and signaling that strengthens the adaptive immune system. The classical complement pathway is initiated by the C1Q subcomplex of the C1 complex, which specifically binds IgG or IgM immunoglobulins complexed with antigens, forming antigen-antibody complexes on the surface of pathogens: C1QA, together with C1QB and C1QC, specifically recognizes and binds the Fc regions of IgG or IgM via its C1q domain. Immunoglobulin-binding activates the proenzyme C1R, which cleaves C1S, initiating the proteolytic cascade of the complement system. The C1Q subcomplex is activated by a hexamer of IgG complexed with antigens, while it is activated by a pentameric IgM. The C1Q subcomplex also recognizes and binds phosphatidylserine exposed on the surface of cells undergoing programmed cell death, possibly promoting activation of the complement system. The polypeptide is Complement C1q subcomponent subunit A (Mus musculus (Mouse)).